Here is a 306-residue protein sequence, read N- to C-terminus: Ribonuclease Z (306 aa).

Zn(2+) is bound by residues histidine 63, histidine 65, aspartate 67, histidine 68, histidine 141, aspartate 211, and histidine 269. Residue aspartate 67 is the Proton acceptor of the active site.

This sequence belongs to the RNase Z family. In terms of assembly, homodimer. Zn(2+) is required as a cofactor.

The catalysed reaction is Endonucleolytic cleavage of RNA, removing extra 3' nucleotides from tRNA precursor, generating 3' termini of tRNAs. A 3'-hydroxy group is left at the tRNA terminus and a 5'-phosphoryl group is left at the trailer molecule.. Functionally, zinc phosphodiesterase, which displays some tRNA 3'-processing endonuclease activity. Probably involved in tRNA maturation, by removing a 3'-trailer from precursor tRNA. This chain is Ribonuclease Z, found in Staphylococcus haemolyticus (strain JCSC1435).